The chain runs to 385 residues: Glucans biosynthesis protein C (385 aa).

Transmembrane regions (helical) follow at residues 17 to 37, 60 to 80, 91 to 111, 137 to 157, 173 to 193, 212 to 232, 239 to 259, 274 to 294, 311 to 331, and 338 to 358; these read AWLM…SHTW, MQVF…RYPL, VGIP…IMLQ, ISHL…VWIF, KFSM…YAVI, FIVM…LAFI, LFTT…VAYL, TESV…FSFG, ASLF…AYIT, and WLGF…LYEI.

Belongs to the acyltransferase 3 family. OpgC subfamily.

It is found in the cell membrane. The protein operates within glycan metabolism; osmoregulated periplasmic glucan (OPG) biosynthesis. Its function is as follows. Necessary for the succinyl substitution of periplasmic glucans. Could catalyze the transfer of succinyl residues from the cytoplasmic side of the membrane to the nascent glucan backbones on the periplasmic side of the membrane. This is Glucans biosynthesis protein C from Shigella sonnei (strain Ss046).